The primary structure comprises 515 residues: Maturase K (515 aa).

This sequence belongs to the intron maturase 2 family. MatK subfamily.

The protein resides in the plastid. It localises to the chloroplast. Its function is as follows. Usually encoded in the trnK tRNA gene intron. Probably assists in splicing its own and other chloroplast group II introns. The polypeptide is Maturase K (Pinus armandii (Chinese white pine)).